The following is a 308-amino-acid chain: Acetylglutamate kinase (308 aa).

Residues Gly-86–Gly-87, Arg-108, and Asn-201 contribute to the substrate site.

It belongs to the acetylglutamate kinase family. ArgB subfamily.

Its subcellular location is the cytoplasm. It carries out the reaction N-acetyl-L-glutamate + ATP = N-acetyl-L-glutamyl 5-phosphate + ADP. It functions in the pathway amino-acid biosynthesis; L-arginine biosynthesis; N(2)-acetyl-L-ornithine from L-glutamate: step 2/4. In terms of biological role, catalyzes the ATP-dependent phosphorylation of N-acetyl-L-glutamate. In Prochlorococcus marinus (strain MIT 9303), this protein is Acetylglutamate kinase.